A 155-amino-acid chain; its full sequence is Aspartate carbamoyltransferase regulatory chain (155 aa).

The Zn(2+) site is built by Cys112, Cys117, Cys140, and Cys143.

It belongs to the PyrI family. Contains catalytic and regulatory chains. Requires Zn(2+) as cofactor.

Functionally, involved in allosteric regulation of aspartate carbamoyltransferase. The protein is Aspartate carbamoyltransferase regulatory chain of Phocaeicola vulgatus (strain ATCC 8482 / DSM 1447 / JCM 5826 / CCUG 4940 / NBRC 14291 / NCTC 11154) (Bacteroides vulgatus).